The primary structure comprises 104 residues: NADH-quinone oxidoreductase subunit K (104 aa).

3 consecutive transmembrane segments (helical) span residues 4-24, 31-51, and 67-87; these read VPAS…LFGA, VIVL…FVAF, and LFTM…LIAL.

The protein belongs to the complex I subunit 4L family. NDH-1 is composed of 14 different subunits. Subunits NuoA, H, J, K, L, M, N constitute the membrane sector of the complex.

It is found in the cell membrane. The catalysed reaction is a quinone + NADH + 5 H(+)(in) = a quinol + NAD(+) + 4 H(+)(out). Its function is as follows. NDH-1 shuttles electrons from NADH, via FMN and iron-sulfur (Fe-S) centers, to quinones in the respiratory chain. The immediate electron acceptor for the enzyme in this species is believed to be a menaquinone. Couples the redox reaction to proton translocation (for every two electrons transferred, four hydrogen ions are translocated across the cytoplasmic membrane), and thus conserves the redox energy in a proton gradient. The polypeptide is NADH-quinone oxidoreductase subunit K (Bacillus anthracis (strain A0248)).